A 140-amino-acid polypeptide reads, in one-letter code: MALVARRAAVPSARSSARPAFARAAPRRSVVVRAEAGAVNDDTFKNVVLESSVPVLVDFWAPWCGPCRIIAPVVDEIAGEYKDKLKCVKLNTDESPNVASEYGIRSIPTIMVFKGGKKCETIIGAVPKATIVQTVEKYLN.

Residues 1 to 34 (MALVARRAAVPSARSSARPAFARAAPRRSVVVRA) constitute a chloroplast transit peptide. Residues 35–140 (EAGAVNDDTF…IVQTVEKYLN (106 aa)) form the Thioredoxin domain. Residues C64 and C67 each act as nucleophile in the active site. The cysteines at positions 64 and 67 are disulfide-linked.

The protein belongs to the thioredoxin family. Plant M-type subfamily. Forms a complex with heterodimeric ferredoxin-thioredoxin reductase (FTR) and ferredoxin.

The protein resides in the plastid. It is found in the chloroplast. Its function is as follows. Participates in various redox reactions through the reversible oxidation of the active center dithiol to a disulfide. The M form is known to activate NADP-malate dehydrogenase. This chain is Thioredoxin M-type, chloroplastic (TRXM), found in Chlamydomonas reinhardtii (Chlamydomonas smithii).